The primary structure comprises 93 residues: LSM complex subunit LSM5 (93 aa).

One can recognise a Sm domain in the interval 7–87; the sequence is LPLEVIDKTI…IAILVPGGKK (81 aa).

It belongs to the snRNP Sm proteins family. Component of the heptameric LSM1-LSM7 complex that forms a seven-membered ring structure with a donut shape. The LSm subunits are arranged in the order LSM1, LSM2, LSM3, LSM6, LSM5, LSM7 and LSM4. Except for LSM1, where a C-terminal helix crosses the ring structure to form additional interactions with LSM3 and LSM6, each subunit interacts only with its two neighboring subunits. The LSM1-LSM7 complex interacts with PAT1; within the complex PAT1 has direct interactions with LSM2 and LSM3. The LSM1-LSM7 complex interacts with XRN1. Component of the heptameric LSM2-LSM8 complex that forms a seven-membered ring structure with a donut shape; an RNA strand can pass through the hole in the center of the ring structure. The LSm subunits are arranged in the order LSM8, LSM2, LSM3, LSM6, LSM5, LSM7 and LSM4. Component of the spliceosome U4/U6-U5 tri-snRNP complex composed of the U4, U6 and U5 snRNAs and at least PRP3, PRP4, PRP6, PRP8, PRP18, PRP31, PRP38, SNU13, SNU23, SNU66, SNU114, SPP381, SMB1, SMD1, SMD2, SMD3, SMX2, SMX3, LSM2, LSM3, LSM4, LSM5, LSM6, LSM7, LSM8, BRR2 and DIB1. May be found in a complex comprising LSM2-LSM7 without LSM1 or LSM8; the complex associates with pre-P RNA and snoRNA SNR5.

The protein localises to the nucleus. Its subcellular location is the nucleolus. The protein resides in the cytoplasm. In terms of biological role, component of LSm protein complexes, which are involved in RNA processing and may function in a chaperone-like manner. Component of the cytoplasmic LSM1-LSM7 complex which is involved in mRNA degradation by activating the decapping step. Together with PAT1, the LSM1-LSM7 complex binds to osmotic stress-activated mRNAs to attenuate the osmotic stress response, probably by limiting ribosome access to the mRNA and consequently translation. Component of the nuclear LSM2-LSM8 complex, which is involved in spliceosome assembly. The LSM2-LSM8 complex plays a role in the biogenesis of the spliceosomal U4/U6-U5 tri-snRNP complex by accelerating PRP24-mediated annealing of U4/U6 di-snRNA. The LSM2-LSM8 complex binds U6 snRNA terminating with a non-cyclic 3' phosphate group. LSM2-LSM8 is probably also involved in degradation of nuclear pre-mRNA by targeting them for decapping. LSM2-LSM8 could be involved in processing of pre-tRNAs, pre-rRNAs and U3 snoRNA, although involvement may be indirect. In a complex that probably contains LSM2-LSM7, but not LSM1 or LSM8, associates with the precursor of the RNA component of RNase P (pre-P RNA) and may be involved in maturing pre-P RNA; the complex also associates with snoRNA SNR5. The polypeptide is LSM complex subunit LSM5 (LSM5) (Saccharomyces cerevisiae (strain ATCC 204508 / S288c) (Baker's yeast)).